Here is a 316-residue protein sequence, read N- to C-terminus: SHC-transforming protein homolog 1 (316 aa).

The PID domain maps to 16–158; that stretch reads GVSLSATYLG…LIDVLTTAIN (143 aa). The region spanning 211–307 is the SH2 domain; the sequence is WYHGNLSRED…ETSLNLIRPV (97 aa). Residues 292–316 are disordered; that stretch reads SEGRDRETSLNLIRPVPCPGSDDIE.

As to quaternary structure, interacts (via PID domain) with daf-2 (via cytoplasmic domain). Interacts with mek-1; the interaction is independent of mek-1 catalytic activity and is constitutive. Interacts (via N-terminus) with mlk-1 (via NPQY motif when phosphorylated on tyrosine residue). Does not interact with jkk-1 or sek-1. Interacts (via SH2 domain) with svh-2. Interacts with svh-4. In terms of tissue distribution, expressed in hypodermis, intestine, head and tail neurons, pharynx, gonads, vulva and body muscles.

Its subcellular location is the cytoplasm. It localises to the nucleus. The protein localises to the cell membrane. Its function is as follows. Scaffold protein which plays an important role in the activation of the JNK pathway composed of mlk-1, mek-1 and kgb-1; by bringing together mek-1 and mlk-1, promotes mlk-1-mediated phosphorylation and activation of mek-1 which in turn phosphorylates kgb-1. In addition, negatively modulates the activation of the insulin/IGF-1-like signaling (IIS) probably by inhibiting the insulin receptor daf-2. Positively regulates the activity of the transcription factor daf-16/FOXO by both inhibiting IIS and activating the JNK pathway. Plays a role in maintaining gonadal basement membrane integrity through activation of the JNK pathway components mek-1 and jnk-1. Involved in the response to several environmental stresses including heavy metal ions (Cu(2+) and Cd(2+)), heat, oxidative and protein misfolding (ER) stresses. Plays a role in gonad and germline development following the L1 diapause. Plays a role in life span and egg laying. Plays a role in axon regeneration after injury. The polypeptide is SHC-transforming protein homolog 1 (Caenorhabditis elegans).